A 393-amino-acid polypeptide reads, in one-letter code: Lipid-A-disaccharide synthase (393 aa).

This sequence belongs to the LpxB family.

It carries out the reaction a lipid X + a UDP-2-N,3-O-bis[(3R)-3-hydroxyacyl]-alpha-D-glucosamine = a lipid A disaccharide + UDP + H(+). The protein operates within bacterial outer membrane biogenesis; LPS lipid A biosynthesis. In terms of biological role, condensation of UDP-2,3-diacylglucosamine and 2,3-diacylglucosamine-1-phosphate to form lipid A disaccharide, a precursor of lipid A, a phosphorylated glycolipid that anchors the lipopolysaccharide to the outer membrane of the cell. The polypeptide is Lipid-A-disaccharide synthase (Actinobacillus pleuropneumoniae serotype 3 (strain JL03)).